Reading from the N-terminus, the 214-residue chain is DELTA-actitoxin-Aeq1b (214 aa).

An N-terminal signal peptide occupies residues 1-19; that stretch reads MSRLIIVFIVVTMICAATA. The propeptide occupies 20-35; that stretch reads LSSKKSINEDEKDEKR. The tract at residues 38–47 is plays an important role in the hemolytic activity; it reads AVAGAVIEGA. The tract at residues 46-65 is N-terminal region; sequence GATLTFNVLQTVLKALGDIS. 7 residues coordinate phosphocholine: Ser89, Val122, Ser140, Pro142, Tyr168, Tyr172, and Tyr173. Residues 140-155 are trp-rich region, which is important for the binding to lipid membrane; the sequence is SIPFDYNLYSNWWNVK. The short motif at 179–181 is the Cell attachment site, crucial for protein stability element; it reads RGD.

It belongs to the actinoporin family. Sea anemone subfamily. As to quaternary structure, octamer or nonamer in membranes. Monomer in the soluble state.

The protein localises to the secreted. Its subcellular location is the nematocyst. The protein resides in the target cell membrane. Pore-forming protein that forms cations-selective hydrophilic pores of around 1 nm and causes cytolysis. Pore formation is a multi-step process that involves specific recognition of membrane sphingomyelin (but neither cholesterol nor phosphatidylcholine) using aromatic rich region and adjacent phosphocholine (POC) binding site, firm binding to the membrane (mainly driven by hydrophobic interactions) accompanied by the transfer of the N-terminal region to the lipid-water interface and finally pore formation after oligomerization of monomers. The polypeptide is DELTA-actitoxin-Aeq1b (Actinia equina (Beadlet anemone)).